We begin with the raw amino-acid sequence, 156 residues long: Small ribosomal subunit protein uS7 (156 aa).

Belongs to the universal ribosomal protein uS7 family. As to quaternary structure, part of the 30S ribosomal subunit. Contacts proteins S9 and S11.

Functionally, one of the primary rRNA binding proteins, it binds directly to 16S rRNA where it nucleates assembly of the head domain of the 30S subunit. Is located at the subunit interface close to the decoding center, probably blocks exit of the E-site tRNA. The polypeptide is Small ribosomal subunit protein uS7 (Methylococcus capsulatus (strain ATCC 33009 / NCIMB 11132 / Bath)).